The following is a 705-amino-acid chain: Solute carrier family 28 member 3 (705 aa).

Residues 1–21 are compositionally biased toward basic and acidic residues; that stretch reads MSRSDPDPGKNSEPSKSKMSL. A disordered region spans residues 1 to 96; that stretch reads MSRSDPDPGK…TEEESEDERQ (96 aa). Topologically, residues 1 to 119 are cytoplasmic; sequence MSRSDPDPGK…FCRKHRVILQ (119 aa). Residues 48 to 63 show a composition bias toward polar residues; the sequence is APGNSTVRSRVVQSGE. Basic and acidic residues predominate over residues 65-74; sequence GRAKQDDRQI. The helical transmembrane segment at 120–140 threads the bilayer; it reads HTIWAVLLTGFLALVIAACAL. Over 141–145 the chain is Extracellular; the sequence is NFHRA. Residues 146-166 traverse the membrane as a helical segment; that stretch reads LPLFVITLVTIFFVVWDRLMA. Over 167–190 the chain is Cytoplasmic; that stretch reads KYEQRIDDVLSPGKRLLERHWFWL. A helical membrane pass occupies residues 191–211; the sequence is KWVVWCSLILAVILWLALDTA. The Extracellular portion of the chain corresponds to 212–214; it reads RLG. The helical transmembrane segment at 215-236 threads the bilayer; it reads QQQLISFGGLVMYIVLLFLFSK. Residues 237-244 are Cytoplasmic-facing; sequence HPTRVYWR. Residues 245–264 form a helical membrane-spanning segment; it reads PVFWGIGLQFLLGLLILRTR. Residues 265–301 lie on the Extracellular side of the membrane; it reads PGFVAFDWMGKQVQTFLGYTDAGAQFVFGEKYTDHFF. Residues 302–322 form a helical membrane-spanning segment; the sequence is AFKILPIVVFFSTVMSMLYYL. Topologically, residues 323–346 are cytoplasmic; that stretch reads GLMQWIIRKVGWLMLVTMGSSPIE. The helical intramembrane region spans 347 to 365; it reads SVVAAGNIFVGQTESPLLV. Residues 366 to 378 lie on the Cytoplasmic side of the membrane; it reads QPYLPHVTKSELH. A helical transmembrane segment spans residues 379-401; the sequence is TIMTAGFATIAGSVLGAYISFGV. At 402 to 403 the chain is on the extracellular side; that stretch reads SS. Residues 404-425 form a helical membrane-spanning segment; that stretch reads THLLTASVMSAPAALAVAKLFW. Residues 426–460 lie on the Cytoplasmic side of the membrane; the sequence is PETEKPKITLKNAMKMENGDSRNLLEAATQGASSS. Residues 461–486 form a helical membrane-spanning segment; the sequence is IPLVANIAANLIAFLALLSFVNSALS. At 487 to 524 the chain is on the extracellular side; sequence WFGSMFDYPQLSFELICSYIFMPFSFMMGVDWQDRFMV. Residues 525–544 constitute an intramembrane region (helical); it reads AKLIGYKTFFNEFVAYEHLS. Residues 545 to 583 lie on the Extracellular side of the membrane; the sequence is KFINLRKAAGPKFVNGVQQYMSIRSETIATYALCGFANF. The helical transmembrane segment at 584–594 threads the bilayer; it reads GSLGIVIGGLT. The Cytoplasmic segment spans residues 595–607; the sequence is SIAPSRKRDIASG. A helical transmembrane segment spans residues 608-630; the sequence is AMRALIAGTIACFMTACIAGMLS. Over 631-705 the chain is Extracellular; sequence DTPVAINCHH…LNCGWIPNIP (75 aa).

Belongs to the concentrative nucleoside transporter (CNT) (TC 2.A.41) family. In terms of assembly, homotrimer. In terms of tissue distribution, expressed in kidney; in the proximal tubule, glomerulus and cortical collecting duct.

It localises to the cell membrane. It catalyses the reaction thymidine(out) + 2 Na(+)(out) = thymidine(in) + 2 Na(+)(in). It carries out the reaction cytidine(out) + 2 Na(+)(out) = cytidine(in) + 2 Na(+)(in). The catalysed reaction is uridine(out) + 2 Na(+)(out) = uridine(in) + 2 Na(+)(in). The enzyme catalyses adenosine(out) + 2 Na(+)(out) = adenosine(in) + 2 Na(+)(in). It catalyses the reaction guanosine(out) + 2 Na(+)(out) = guanosine(in) + 2 Na(+)(in). It carries out the reaction inosine(out) + 2 Na(+)(out) = inosine(in) + 2 Na(+)(in). Sodium-dependent, pyrimidine- and purine-selective. Involved in the homeostasis of endogenous nucleosides. Exhibits the transport characteristics of the nucleoside transport system cib or N3 subtype (N3/cib) (with marked transport of both thymidine and inosine). Employs a 2:1 sodium/nucleoside ratio. Also able to transport gemcitabine, 3'-azido-3'-deoxythymidine (AZT), ribavirin and 3-deazauridine. This chain is Solute carrier family 28 member 3 (Slc28a3), found in Rattus norvegicus (Rat).